The primary structure comprises 199 residues: Large ribosomal subunit protein uL18 (199 aa).

It belongs to the universal ribosomal protein uL18 family. In terms of assembly, part of the 50S ribosomal subunit. Contacts the 5S and 23S rRNAs.

This is one of the proteins that bind and probably mediate the attachment of the 5S RNA into the large ribosomal subunit, where it forms part of the central protuberance. This is Large ribosomal subunit protein uL18 from Saccharolobus solfataricus (strain ATCC 35092 / DSM 1617 / JCM 11322 / P2) (Sulfolobus solfataricus).